The sequence spans 137 residues: Dormancy-associated protein homolog 3 (137 aa).

Disordered stretches follow at residues 1–55 (MGLL…DSLP) and 69–137 (KPPG…TYGM). Residues 32–43 (FRPSSGNDQSEA) are compositionally biased toward polar residues. A compositionally biased stretch (low complexity) spans 70-87 (PPGYQGSSAPASPAGSTP). Residue serine 81 is modified to Phosphoserine. Over residues 88–97 (PLSPFSPPLS) the composition is skewed to pro residues. A compositionally biased stretch (basic and acidic residues) spans 104–118 (EPFRFRRRSTSDAFE). Residues 127 to 137 (GPRSSPPTYGM) show a composition bias toward polar residues.

It belongs to the DRM1/ARP family.

The chain is Dormancy-associated protein homolog 3 from Arabidopsis thaliana (Mouse-ear cress).